The sequence spans 1325 residues: Cyclic nucleotide-gated channel beta-1 (1325 aa).

Disordered regions lie at residues 1–124, 147–198, 227–279, 340–470, 482–637, and 659–694; these read MLGW…QVAV, PQPV…SLWL, AVLD…PGDP, WEDA…LDSC, LERT…SQNS, and KEKL…PAEA. The Cytoplasmic segment spans residues 1-732; the sequence is MLGWVQRVLP…SIDPLTNLMY (732 aa). Residues 43-81 show a composition bias toward acidic residues; sequence PQQEPEPEPEPEPEPEPEPEPEPEPEPEPEPEPVPEEAP. Positions 105–121 are enriched in polar residues; it reads LQETQVADPAQPTSQAQ. The segment covering 370 to 379 has biased composition (basic and acidic residues); sequence IPRELTKIQE. Composition is skewed to acidic residues over residues 380–393, 418–463, and 495–517; these read ERED…EEKE, EEKE…EEEP, and LPEE…EEKK. Over residues 518–527 the composition is skewed to basic and acidic residues; sequence EEEVEKKEEG. Residues 560-571 are compositionally biased toward pro residues; it reads TLPPPERPPPSP. The interval 633–643 is calmodulin-binding CaM1; that stretch reads ASQNSAIINDR. The helical transmembrane segment at 733-754 threads the bilayer; that stretch reads ILWLFFVVLAWNWNCWLIPVRW. Residues 755–763 are Extracellular-facing; sequence AFPYQRADN. The helical transmembrane segment at 764 to 785 threads the bilayer; that stretch reads IHFWLLMDYLCDFIYLLDITVF. Residues 786-800 lie on the Cytoplasmic side of the membrane; the sequence is QMRLQFVKGGDIITD. Residues 801-820 form a helical membrane-spanning segment; the sequence is KKEMRNNYLKSRRFKMDLLC. Topologically, residues 821–836 are extracellular; it reads LLPLDFLYLKLGINPL. Residues 837–849 traverse the membrane as a helical segment; that stretch reads LRLPRCLKYMAFF. The Cytoplasmic segment spans residues 850–861; it reads EFNNRLEAILSK. A helical transmembrane segment spans residues 862-884; the sequence is AYVYRVIRTTAYLLYSLHLNSCL. Residues 862–961 are ion conduction pathway; sequence AYVYRVIRTT…IGQMRDVVGA (100 aa). At 885–907 the chain is on the extracellular side; that stretch reads YYWASAFQGIGSTHWVYDGVGNS. Helical transmembrane passes span 908 to 934 and 935 to 960; these read YIRC…LFEI and VFQL…DVVG. The Cytoplasmic portion of the chain corresponds to 961–1325; sequence AATAGQTYYR…VLEEKKEGAE (365 aa). The C-linker stretch occupies residues 964 to 1040; the sequence is AGQTYYRSCM…SIVSKVALFQ (77 aa). The tract at residues 1038–1142 is cNMP-binding domain; sequence LFQGCDRQMI…LDKKDLNEIL (105 aa). The segment at 1044-1160 is cyclic nucleotide-binding domain; sequence RQMIFDMLKR…LLRKKARRML (117 aa). 3',5'-cyclic GMP contacts are provided by glycine 1105, glutamate 1106, serine 1108, arginine 1118, and threonine 1119. Position 1118 (arginine 1118) interacts with 3',5'-cyclic AMP. Residues 1224–1230 are calmodulin-binding CaM2; it reads QQQLLEQ. Positions 1226-1250 are enriched in low complexity; the sequence is QLLEQAKSSQEAGGEEGSGATDQPA. The segment at 1226–1325 is disordered; the sequence is QLLEQAKSSQ…VLEEKKEGAE (100 aa). A compositionally biased stretch (pro residues) spans 1262 to 1279; sequence KPPGPPEPSAQSSPPPAS.

This sequence belongs to the cyclic nucleotide-gated cation channel (TC 1.A.1.5) family. CNGB1 subfamily. As to expression, rod outer segments. Olfactory sensory neurons.

It is found in the cell projection. Its subcellular location is the cilium membrane. It catalyses the reaction Ca(2+)(in) = Ca(2+)(out). It carries out the reaction Na(+)(in) = Na(+)(out). The enzyme catalyses K(+)(in) = K(+)(out). The catalysed reaction is NH4(+)(in) = NH4(+)(out). It catalyses the reaction Rb(+)(in) = Rb(+)(out). It carries out the reaction Li(+)(in) = Li(+)(out). The enzyme catalyses Cs(+)(in) = Cs(+)(out). Functionally, pore-forming subunit of the rod cyclic nucleotide-gated channel. Mediates rod photoresponses at dim light converting transient changes in intracellular cGMP levels into electrical signals. In the dark, cGMP levels are high and keep the channel open enabling a steady inward current carried by Na(+) and Ca(2+) ions that leads to membrane depolarization and neurotransmitter release from synaptic terminals. Upon photon absorption cGMP levels decline leading to channel closure and membrane hyperpolarization that ultimately slows neurotransmitter release and signals the presence of light, the end point of the phototransduction cascade. Pore-forming subunit of the olfactory cyclic nucleotide-gated channel. Operates in the cilia of olfactory sensory neurons where chemical stimulation of the odorant is converted to an electrical signal. Mediates odorant-induced cAMP-dependent Ca(2+) influx triggering neuron depolarization. The rise of intracellular Ca(2+) levels potentiates the olfactory response by activating Ca(2+)-dependent Cl(-) channels, but it also serves as a negative feedback signal to desensitize the channel for rapid adaptation to odorants. Conducts cGMP- and cAMP-gated ion currents, with permeability for monovalent and divalent cations. The selectivity for Ca(2+) over Na(+) increases with cGMP concentrations, whereas the selectivity among monovalent ions is independent of the cGMP levels. The chain is Cyclic nucleotide-gated channel beta-1 from Mus musculus (Mouse).